The following is a 401-amino-acid chain: Argininosuccinate synthase (401 aa).

8 to 16 (AYSGGLDTS) lines the ATP pocket. Tyr-86 contacts L-citrulline. Gly-116 lines the ATP pocket. The L-aspartate site is built by Thr-118, Asn-122, and Asp-123. Asn-122 is a binding site for L-citrulline. Arg-126, Ser-174, Glu-258, and Tyr-270 together coordinate L-citrulline.

The protein belongs to the argininosuccinate synthase family. Type 1 subfamily. Homotetramer.

The protein resides in the cytoplasm. It carries out the reaction L-citrulline + L-aspartate + ATP = 2-(N(omega)-L-arginino)succinate + AMP + diphosphate + H(+). The protein operates within amino-acid biosynthesis; L-arginine biosynthesis; L-arginine from L-ornithine and carbamoyl phosphate: step 2/3. In Acidothermus cellulolyticus (strain ATCC 43068 / DSM 8971 / 11B), this protein is Argininosuccinate synthase.